Here is a 276-residue protein sequence, read N- to C-terminus: MTKTEESPLHFFDIFSTLPGTSKSWSSNVLKIRMVLNYKGIPYTQSFHSYPDIAPLLQSLSVPPHKQGRFKYTLPAICHPSSVKSSPSGAMMDSLPIACHLDETYPDPPLFPSGEASYALALAIGKLMVPAALKTCDLLLPKAEEVLDDRGKEYFVRTRTEIFGKPLSELRPKTEEGVRAIVDGMKADMEVFISMLRGRGEGKKSGPFLEGEKPGYADFILVTFLSWSHRFDMELWREIMDMGNGEFRALWHASVQWLEGQGEEKEWAVPQLSTVD.

The GST N-terminal domain occupies 16 to 109; sequence STLPGTSKSW…HLDETYPDPP (94 aa).

The protein belongs to the GST superfamily.

It functions in the pathway mycotoxin biosynthesis. Its function is as follows. Glutathione S-transferase-like protein; part of the gene cluster that mediates the biosynthesis of the secondary metabolite ustiloxin B, an antimitotic tetrapeptide. First, ustA is processed by the subtilisin-like endoprotease Kex2 that is outside the ustiloxin B gene cluster, at the C-terminal side of Arg-Lys, after transfer to Golgi apparatus through the endoplasmic reticulum (ER). Cleavage by KEX2 generates 16 peptides YAIG-I to YAIG-XVI. To process the precursor peptide further, at least two peptidases are necessary to cleave the N-terminal and C-terminal sides of the Tyr-Ala-Ile-Gly core peptide which serves as backbone for the synthesis of ustiloxin B, through cyclization and modification of the tyrosine with a non-protein coding amino acid, norvaline. One of the two peptidases must be the serine peptidase ustP; and the other pepdidase is probably ustH. Macrocyclization of the core peptide derived from ustA requires the tyrosinase ustQ, as well as the homologous oxidases ustYa and ustYb, and leads to the production of the first cyclization product N-desmethylustiloxin F. For the formation of N-desmethylustiloxin F, three oxidation steps are required, hydroxylation at the benzylic position, hydroxylation at either the aromatic ring of Tyr or beta-position of Ile, and oxidative cyclization. UstQ may catalyze the oxidation of a phenol moiety, whereas the ustYa and ustYb are most likely responsible for the remaining two-step oxidations. N-desmethylustiloxin F is then methylated by ustM to yield ustiloxin F which in turn substrate of the cytochrome P450 monooxygenase ustC which catalyzes the formation of S-deoxyustiloxin H. The flavoprotein monooxygenases ustF1 and ustF2 then participate in the modification of the side chain of S-deoxyustiloxin H, leading to the synthesis of an oxime intermediate, via ustiloxin H. Finally, carboxylative dehydration performed by the cysteine desulfurase-like protein ustD yields ustiloxin B. The protein is Glutathione S-transferase-like protein ustS of Aspergillus flavus (strain ATCC 200026 / FGSC A1120 / IAM 13836 / NRRL 3357 / JCM 12722 / SRRC 167).